A 687-amino-acid polypeptide reads, in one-letter code: CWF19-like protein 2 homolog (687 aa).

Residues 6 to 51 adopt a coiled-coil conformation; that stretch reads FESGREKDKARQELREAREAMLQQAKERAELRGQRERQKELRGEAD. Over residues 24–50 the composition is skewed to basic and acidic residues; the sequence is EAMLQQAKERAELRGQRERQKELRGEA. The interval 24–281 is disordered; it reads EAMLQQAKER…PKSRPSCLTD (258 aa). Positions 66–92 are enriched in basic residues; sequence KKSKKNVSKHKSRSKSKSSKKSRKHRN. Residues 93–107 show a composition bias toward low complexity; the sequence is SSSSSESSTSSSSSF. Residues 108-131 are a coiled coil; it reads SEDEKERKRRKKKSKRSRKESASE. Positions 114–125 are enriched in basic residues; the sequence is RKRRKKKSKRSR. Residues serine 128 and serine 130 each carry the phosphoserine modification. Basic and acidic residues-rich tracts occupy residues 146-157 and 168-180; these read VTKKEPPQRDDW and FSRE…KPNE. Residues 290–325 adopt a coiled-coil conformation; the sequence is KAIKAELKGKKELAAELNQQLEAARKERAEFIASGE. Residues 355–383 form a disordered region; sequence VRPLVQSGDPNESYGGRMGPKRGSKKVDT. Residues 444–475 are a coiled coil; that stretch reads KQISASDAEKREMQSAIREHEKLVATLDNCER.

Belongs to the CWF19 family.

The polypeptide is CWF19-like protein 2 homolog (Drosophila melanogaster (Fruit fly)).